Reading from the N-terminus, the 65-residue chain is Large ribosomal subunit protein uL29 (65 aa).

It belongs to the universal ribosomal protein uL29 family.

The polypeptide is Large ribosomal subunit protein uL29 (Acinetobacter baylyi (strain ATCC 33305 / BD413 / ADP1)).